A 937-amino-acid chain; its full sequence is Bifunctional glutamine synthetase adenylyltransferase/adenylyl-removing enzyme (937 aa).

The tract at residues 1 to 436 is adenylyl removase; sequence MSQPIPSASP…AAEFAELLAP (436 aa). Residues 443–937 form an adenylyl transferase region; the sequence is PDTLADYWRA…QLRFQPGKGA (495 aa).

The protein belongs to the GlnE family. Requires Mg(2+) as cofactor.

The enzyme catalyses [glutamine synthetase]-O(4)-(5'-adenylyl)-L-tyrosine + phosphate = [glutamine synthetase]-L-tyrosine + ADP. The catalysed reaction is [glutamine synthetase]-L-tyrosine + ATP = [glutamine synthetase]-O(4)-(5'-adenylyl)-L-tyrosine + diphosphate. Functionally, involved in the regulation of glutamine synthetase GlnA, a key enzyme in the process to assimilate ammonia. When cellular nitrogen levels are high, the C-terminal adenylyl transferase (AT) inactivates GlnA by covalent transfer of an adenylyl group from ATP to specific tyrosine residue of GlnA, thus reducing its activity. Conversely, when nitrogen levels are low, the N-terminal adenylyl removase (AR) activates GlnA by removing the adenylyl group by phosphorolysis, increasing its activity. The regulatory region of GlnE binds the signal transduction protein PII (GlnB) which indicates the nitrogen status of the cell. In Xanthomonas campestris pv. campestris (strain B100), this protein is Bifunctional glutamine synthetase adenylyltransferase/adenylyl-removing enzyme.